The following is a 153-amino-acid chain: Nucleoside diphosphate kinase (153 aa).

Ala2 bears the N-acetylalanine mark. Positions 13, 61, 89, 95, 106, and 116 each coordinate ATP. The active-site Pros-phosphohistidine intermediate is the His119. Ser126 is modified (phosphoserine).

It belongs to the NDK family. Homohexamer. The cofactor is Mg(2+).

It localises to the cytoplasm. The protein localises to the cytoskeleton. The catalysed reaction is a 2'-deoxyribonucleoside 5'-diphosphate + ATP = a 2'-deoxyribonucleoside 5'-triphosphate + ADP. The enzyme catalyses a ribonucleoside 5'-diphosphate + ATP = a ribonucleoside 5'-triphosphate + ADP. Major role in the synthesis of nucleoside triphosphates other than ATP. The ATP gamma phosphate is transferred to the NDP beta phosphate via a ping-pong mechanism, using a phosphorylated active-site intermediate. This chain is Nucleoside diphosphate kinase (awd), found in Drosophila melanogaster (Fruit fly).